The sequence spans 532 residues: Zinc metalloproteinase nas-29 (532 aa).

Positions 1-22 are cleaved as a signal peptide; that stretch reads MISKNTSFCGFLILVLATCMSA. Residues N5, N27, N70, and N106 are each glycosylated (N-linked (GlcNAc...) asparagine). A propeptide spanning residues 23–134 is cleaved from the precursor; the sequence is QFVSNESIKL…NGESTDRTKR (112 aa). The 201-residue stretch at 135–335 folds into the Peptidase M12A domain; sequence QAYLDNNYPA…HIMNQHYQCQ (201 aa). Cystine bridges form between C179-C334, C201-C222, C338-C358, C360-C369, C380-C408, and C435-C456. Residue H230 coordinates Zn(2+). The active site involves E231. The Zn(2+) site is built by H234 and H240. One can recognise an EGF-like domain in the interval 330–370; it reads QHYQCQEKCPTQAPCQNGGFTNSRNCKVCKCPTGFGGAYCQ. Residues 380-494 enclose the CUB domain; that stretch reads CGGYLNAEET…VSFEYSFVST (115 aa). N503 is a glycosylation site (N-linked (GlcNAc...) asparagine).

Zn(2+) serves as cofactor.

The protein localises to the secreted. Metalloprotease. This is Zinc metalloproteinase nas-29 (nas-29) from Caenorhabditis elegans.